Here is a 186-residue protein sequence, read N- to C-terminus: Orotate phosphoribosyltransferase (186 aa).

5-phospho-alpha-D-ribose 1-diphosphate-binding positions include Arg-96, Lys-100, His-102, and 121 to 129; that span reads DDVATTGTS. Residues Thr-125 and Arg-153 each contribute to the orotate site.

It belongs to the purine/pyrimidine phosphoribosyltransferase family. PyrE subfamily. In terms of assembly, homodimer. Mg(2+) is required as a cofactor.

The enzyme catalyses orotidine 5'-phosphate + diphosphate = orotate + 5-phospho-alpha-D-ribose 1-diphosphate. It participates in pyrimidine metabolism; UMP biosynthesis via de novo pathway; UMP from orotate: step 1/2. Its function is as follows. Catalyzes the transfer of a ribosyl phosphate group from 5-phosphoribose 1-diphosphate to orotate, leading to the formation of orotidine monophosphate (OMP). The protein is Orotate phosphoribosyltransferase of Aeropyrum pernix (strain ATCC 700893 / DSM 11879 / JCM 9820 / NBRC 100138 / K1).